Consider the following 195-residue polypeptide: Archaetidylinositol phosphate synthase (195 aa).

2 helical membrane passes run 27–47 (IALP…AASA) and 54–74 (LITG…DGAV). Residues Asp-68, Asp-71, Asp-89, and Asp-93 each contribute to the Mg(2+) site. Asp-93 acts as the Proton acceptor in catalysis. The next 2 helical transmembrane spans lie at 99–119 (IIII…LLAL) and 158–178 (LAGY…LAAL).

The protein belongs to the CDP-alcohol phosphatidyltransferase class-I family. Requires Mn(2+) as cofactor. It depends on Mg(2+) as a cofactor.

Its subcellular location is the cell membrane. It catalyses the reaction CDP-2,3-bis-O-(phytanyl)-sn-glycerol + 1D-myo-inositol 3-phosphate = saturated 1-archaetidyl-1D-myo-inositol 3-phosphate + CMP + H(+). It functions in the pathway lipid metabolism; phospholipid metabolism. Its function is as follows. Catalyzes the formation of archaetidylinositol phosphate (AIP) from CDP-archaeol (CDP-ArOH or CDP-2,3-bis-(O-phytanyl)-sn-glycerol) and 1L-myo-inositol 1-phosphate (IP or 1D-myo-inositol 3-phosphate). AIP is a precursor of archaetidyl-myo-inositol (AI), an ether-type inositol phospholipid ubiquitously distributed in archaea membranes and essential for glycolipid biosynthesis in archaea. This chain is Archaetidylinositol phosphate synthase, found in Methanothermobacter thermautotrophicus (strain ATCC 29096 / DSM 1053 / JCM 10044 / NBRC 100330 / Delta H) (Methanobacterium thermoautotrophicum).